An 89-amino-acid polypeptide reads, in one-letter code: Small ribosomal subunit protein uS15 (89 aa).

It belongs to the universal ribosomal protein uS15 family. As to quaternary structure, part of the 30S ribosomal subunit. Forms a bridge to the 50S subunit in the 70S ribosome, contacting the 23S rRNA.

In terms of biological role, one of the primary rRNA binding proteins, it binds directly to 16S rRNA where it helps nucleate assembly of the platform of the 30S subunit by binding and bridging several RNA helices of the 16S rRNA. Its function is as follows. Forms an intersubunit bridge (bridge B4) with the 23S rRNA of the 50S subunit in the ribosome. This Dechloromonas aromatica (strain RCB) protein is Small ribosomal subunit protein uS15.